The following is a 493-amino-acid chain: NAD(P)H dehydrogenase (quinone) (493 aa).

Residues 12–13 (PA), 35–37 (DCD), 42–43 (AA), lysine 52, glycine 117, aspartate 317, 324–325 (LA), and tyrosine 450 each bind FAD.

It belongs to the class-I pyridine nucleotide-disulfide oxidoreductase family. Homotetramer. Requires FAD as cofactor.

It carries out the reaction a quinone + NADH + H(+) = a quinol + NAD(+). The enzyme catalyses a quinone + NADPH + H(+) = a quinol + NADP(+). May contribute to virulence by increasing resistance to reactive oxygen intermediates. It can reduce 2,6-dimethyl-1,4-benzoquinone (DMBQ), 5-hydroxy-1,4-naphthaquinone (5-HNQ) and menadione. In Mycobacterium tuberculosis (strain CDC 1551 / Oshkosh), this protein is NAD(P)H dehydrogenase (quinone) (lpdA).